The primary structure comprises 56 residues: MKYFLSATFLIIVFMYLMYFCISIVVNNARVQQDLFYHYNYVPDTLLNTVRVHKLK.

In terms of biological role, plays an essential role in the process of oral infection. May participate in the crossing of occlusion-derived virions through the host peritrophic membrane during oral infection. The protein is Per os infectivity factor AC110 of Autographa californica nuclear polyhedrosis virus (AcMNPV).